The sequence spans 275 residues: MGIRSFRPYTPGTRQATVSDFSEITKSKPEKSLTKYKHRKKGRNNRGVITCRHRGGGHKRLYRLIDFRRDKRDITAQVTAIEYDPNRNARIALVQYEDGEKRYILQPAGLGVGDTIIAGEEAPYEIGNALPLYKIPLGTEIHNIELYAGRGGQMVRSAGAFAQLVAKEGDYVTIKLPSKEVRMVRKECYATIGKVGNAEARNLKLGKAGRTRHLGRRPQVRGSVMNPVDHPHGGGEGRAPIGRSGPVTPWGKPALGKKTRKKKKQSSSLIVRRRR.

Disordered regions lie at residues M1 to I24 and A208 to R275. Polar residues predominate over residues G12–S22. Basic residues-rich tracts occupy residues A208–Q219 and L255–R275.

This sequence belongs to the universal ribosomal protein uL2 family. As to quaternary structure, part of the 50S ribosomal subunit. Forms a bridge to the 30S subunit in the 70S ribosome.

In terms of biological role, one of the primary rRNA binding proteins. Required for association of the 30S and 50S subunits to form the 70S ribosome, for tRNA binding and peptide bond formation. It has been suggested to have peptidyltransferase activity; this is somewhat controversial. Makes several contacts with the 16S rRNA in the 70S ribosome. The protein is Large ribosomal subunit protein uL2 of Picosynechococcus sp. (strain ATCC 27264 / PCC 7002 / PR-6) (Agmenellum quadruplicatum).